The primary structure comprises 326 residues: Beta-ketoacyl-[acyl-carrier-protein] synthase III (326 aa).

Residues Cys120 and His253 contribute to the active site. Positions 254 to 258 (QANIR) are ACP-binding. Asn283 is an active-site residue.

This sequence belongs to the thiolase-like superfamily. FabH family. Homodimer.

It localises to the cytoplasm. The catalysed reaction is malonyl-[ACP] + acetyl-CoA + H(+) = 3-oxobutanoyl-[ACP] + CO2 + CoA. Its pathway is lipid metabolism; fatty acid biosynthesis. Functionally, catalyzes the condensation reaction of fatty acid synthesis by the addition to an acyl acceptor of two carbons from malonyl-ACP. Catalyzes the first condensation reaction which initiates fatty acid synthesis and may therefore play a role in governing the total rate of fatty acid production. Possesses both acetoacetyl-ACP synthase and acetyl transacylase activities. Its substrate specificity determines the biosynthesis of branched-chain and/or straight-chain of fatty acids. This chain is Beta-ketoacyl-[acyl-carrier-protein] synthase III, found in Ralstonia pickettii (strain 12J).